The primary structure comprises 455 residues: Bifunctional protein GlmU (455 aa).

The interval 1–230 (MTKRNAIILA…FDESMGVNDR (230 aa)) is pyrophosphorylase. UDP-N-acetyl-alpha-D-glucosamine contacts are provided by residues 9–12 (LAAG), K23, Q73, 78–79 (GT), 101–103 (SGD), G140, E155, N170, and N228. Mg(2+) is bound at residue D103. N228 contributes to the Mg(2+) binding site. Residues 231–251 (VALARANKVMRNRINTHWMRE) are linker. The N-acetyltransferase stretch occupies residues 252 to 455 (GVSMIDPETT…KENYAKKLPW (204 aa)). UDP-N-acetyl-alpha-D-glucosamine is bound by residues R333 and K351. H363 serves as the catalytic Proton acceptor. The UDP-N-acetyl-alpha-D-glucosamine site is built by Y366 and N377. Residues 386–387 (NY), S405, A423, and R440 each bind acetyl-CoA.

This sequence in the N-terminal section; belongs to the N-acetylglucosamine-1-phosphate uridyltransferase family. The protein in the C-terminal section; belongs to the transferase hexapeptide repeat family. In terms of assembly, homotrimer. Requires Mg(2+) as cofactor.

The protein resides in the cytoplasm. It catalyses the reaction alpha-D-glucosamine 1-phosphate + acetyl-CoA = N-acetyl-alpha-D-glucosamine 1-phosphate + CoA + H(+). The catalysed reaction is N-acetyl-alpha-D-glucosamine 1-phosphate + UTP + H(+) = UDP-N-acetyl-alpha-D-glucosamine + diphosphate. The protein operates within nucleotide-sugar biosynthesis; UDP-N-acetyl-alpha-D-glucosamine biosynthesis; N-acetyl-alpha-D-glucosamine 1-phosphate from alpha-D-glucosamine 6-phosphate (route II): step 2/2. It participates in nucleotide-sugar biosynthesis; UDP-N-acetyl-alpha-D-glucosamine biosynthesis; UDP-N-acetyl-alpha-D-glucosamine from N-acetyl-alpha-D-glucosamine 1-phosphate: step 1/1. Its pathway is bacterial outer membrane biogenesis; LPS lipid A biosynthesis. In terms of biological role, catalyzes the last two sequential reactions in the de novo biosynthetic pathway for UDP-N-acetylglucosamine (UDP-GlcNAc). The C-terminal domain catalyzes the transfer of acetyl group from acetyl coenzyme A to glucosamine-1-phosphate (GlcN-1-P) to produce N-acetylglucosamine-1-phosphate (GlcNAc-1-P), which is converted into UDP-GlcNAc by the transfer of uridine 5-monophosphate (from uridine 5-triphosphate), a reaction catalyzed by the N-terminal domain. The sequence is that of Bifunctional protein GlmU from Limosilactobacillus reuteri (strain DSM 20016) (Lactobacillus reuteri).